Consider the following 445-residue polypeptide: MKERKFFGTDGIRGKVGSGQMTPELALKLGWAAGRVLSRSGTKKVIIGKDTRISGYMFESALEAGLSAAGLNVMLMGPMPTPAVAYLTRTFRAEAGVVISASHNPYYDNGIKFFSTDGSKLDDNLELEIEAELEKPLVCVESHLLGKVSRIEDARGRYIEYCKGNFPAEHTLTGLKIVVDCAHGATYHIAPAVFRELGAEVIAIGDKPNGMNINDKVGATSMGKICETVLAENADLGIALDGDGDRIMMVNSKGEVIDGDQILYILACDAKSRGVLRGGVVGTLMSNLGLDLALQALDIPFARSKVGDRYVMELLKELDWRIGGENSGHILNLDHGTTGDGIVAGILVLAAMRRQNATLEELTSAMEMLPQVLVNVRFEGEHDPLKSDKVKAAQAQVESELGVRGRVLLRKSGTEPLIRVMVEGDDHSAVLAHANLIADAVKSVS.

Catalysis depends on S102, which acts as the Phosphoserine intermediate. Mg(2+) is bound by residues S102, D241, D243, and D245. S102 carries the phosphoserine modification.

It belongs to the phosphohexose mutase family. Mg(2+) is required as a cofactor. In terms of processing, activated by phosphorylation.

The enzyme catalyses alpha-D-glucosamine 1-phosphate = D-glucosamine 6-phosphate. In terms of biological role, catalyzes the conversion of glucosamine-6-phosphate to glucosamine-1-phosphate. The chain is Phosphoglucosamine mutase 1 from Shewanella baltica (strain OS185).